The primary structure comprises 224 residues: Uracil-DNA glycosylase (224 aa).

The active-site Proton acceptor is the Asp-64.

The protein belongs to the uracil-DNA glycosylase (UDG) superfamily. UNG family.

It localises to the cytoplasm. The catalysed reaction is Hydrolyzes single-stranded DNA or mismatched double-stranded DNA and polynucleotides, releasing free uracil.. Excises uracil residues from the DNA which can arise as a result of misincorporation of dUMP residues by DNA polymerase or due to deamination of cytosine. The sequence is that of Uracil-DNA glycosylase from Clostridioides difficile (strain 630) (Peptoclostridium difficile).